A 462-amino-acid chain; its full sequence is Squalene synthase ERG9 (462 aa).

A helical membrane pass occupies residues 406-426 (AVVLFGVVIAALVCISGLMLG).

Belongs to the phytoene/squalene synthase family. Requires Mg(2+) as cofactor.

Its subcellular location is the endoplasmic reticulum membrane. It is found in the microsome. It carries out the reaction 2 (2E,6E)-farnesyl diphosphate + NADPH + H(+) = squalene + 2 diphosphate + NADP(+). The catalysed reaction is 2 (2E,6E)-farnesyl diphosphate + NADH + H(+) = squalene + 2 diphosphate + NAD(+). It participates in terpene metabolism; lanosterol biosynthesis; lanosterol from farnesyl diphosphate: step 1/3. The protein operates within steroid metabolism; ergosterol biosynthesis. Functionally, squalene synthase; part of the third module of ergosterol biosynthesis pathway that includes the late steps of the pathway. ERG9 produces squalene from 2 farnesyl pyrophosphate moieties. The third module or late pathway involves the ergosterol synthesis itself through consecutive reactions that mainly occur in the endoplasmic reticulum (ER) membrane. Firstly, the squalene synthase ERG9 catalyzes the condensation of 2 farnesyl pyrophosphate moieties to form squalene, which is the precursor of all steroids. Squalene synthase is crucial for balancing the incorporation of farnesyl diphosphate (FPP) into sterol and nonsterol isoprene synthesis. Secondly, squalene is converted into lanosterol by the consecutive action of the squalene epoxidase ERG1 and the lanosterol synthase ERG7. Then, the delta(24)-sterol C-methyltransferase ERG6 methylates lanosterol at C-24 to produce eburicol. Eburicol is the substrate of the sterol 14-alpha demethylase encoded by CYP51A, CYP51B and CYP51C, to yield 4,4,24-trimethyl ergosta-8,14,24(28)-trienol. CYP51B encodes the enzyme primarily responsible for sterol 14-alpha-demethylation, and plays an essential role in ascospore formation. CYP51A encodes an additional sterol 14-alpha-demethylase, induced on ergosterol depletion and responsible for the intrinsic variation in azole sensitivity. The third CYP51 isoform, CYP51C, does not encode a sterol 14-alpha-demethylase, but is required for full virulence on host wheat ears. The C-14 reductase ERG24 then reduces the C14=C15 double bond which leads to 4,4-dimethylfecosterol. A sequence of further demethylations at C-4, involving the C-4 demethylation complex containing the C-4 methylsterol oxidases ERG25, the sterol-4-alpha-carboxylate 3-dehydrogenase ERG26 and the 3-keto-steroid reductase ERG27, leads to the production of fecosterol via 4-methylfecosterol. ERG28 has a role as a scaffold to help anchor ERG25, ERG26 and ERG27 to the endoplasmic reticulum. The C-8 sterol isomerase ERG2 then catalyzes the reaction which results in unsaturation at C-7 in the B ring of sterols and thus converts fecosterol to episterol. The sterol-C5-desaturases ERG3A and ERG3BB then catalyze the introduction of a C-5 double bond in the B ring to produce 5-dehydroepisterol. The C-22 sterol desaturases ERG5A and ERG5B further convert 5-dehydroepisterol into ergosta-5,7,22,24(28)-tetraen-3beta-ol by forming the C-22(23) double bond in the sterol side chain. Finally, ergosta-5,7,22,24(28)-tetraen-3beta-ol is substrate of the C-24(28) sterol reductase ERG4 to produce ergosterol. This is Squalene synthase ERG9 from Gibberella zeae (strain ATCC MYA-4620 / CBS 123657 / FGSC 9075 / NRRL 31084 / PH-1) (Wheat head blight fungus).